The chain runs to 356 residues: Beta-hexosaminidase (356 aa).

Substrate is bound by residues D75, R83, R150, and 180 to 181 (KH). Catalysis depends on H193, which acts as the Proton donor/acceptor. The active-site Nucleophile is the D264.

It belongs to the glycosyl hydrolase 3 family. NagZ subfamily.

Its subcellular location is the cytoplasm. The enzyme catalyses Hydrolysis of terminal non-reducing N-acetyl-D-hexosamine residues in N-acetyl-beta-D-hexosaminides.. It functions in the pathway cell wall biogenesis; peptidoglycan recycling. Plays a role in peptidoglycan recycling by cleaving the terminal beta-1,4-linked N-acetylglucosamine (GlcNAc) from peptide-linked peptidoglycan fragments, giving rise to free GlcNAc, anhydro-N-acetylmuramic acid and anhydro-N-acetylmuramic acid-linked peptides. The chain is Beta-hexosaminidase from Aromatoleum aromaticum (strain DSM 19018 / LMG 30748 / EbN1) (Azoarcus sp. (strain EbN1)).